We begin with the raw amino-acid sequence, 170 residues long: MARVEL domain-containing protein 1 (170 aa).

Residues 1–38 (MEGERPRSDTVTTTVSSHMETISLGGSIAYDRSFLRSP) are Cytoplasmic-facing. The 134-residue stretch at 34–167 (FLRSPTGVLL…STYFSFQAWR (134 aa)) folds into the MARVEL domain. The helical transmembrane segment at 39-59 (TGVLLLMEIMFGLLVWALIAG) threads the bilayer. Over 60–67 (SEYFLFSA) the chain is Extracellular. A helical membrane pass occupies residues 68 to 88 (FGWVMFVAVFYWVLSVFFFLL). Residues 89 to 102 (HLTRANTRITKVPW) are Cytoplasmic-facing. Residues 103–123 (SLVGLCFNGSAFVLYLIAAVV) traverse the membrane as a helical segment. Topologically, residues 124–145 (EASSVNKDVHQHHNYNSWTASS) are extracellular. A helical membrane pass occupies residues 146–166 (FFAFIVTVCYALSTYFSFQAW). Residues 167 to 170 (RTKS) are Cytoplasmic-facing.

It is found in the membrane. Its subcellular location is the nucleus. The polypeptide is MARVEL domain-containing protein 1 (marveld1) (Xenopus laevis (African clawed frog)).